The sequence spans 199 residues: Pneumococcal vaccine antigen A homolog (199 aa).

It is found in the cell surface. The sequence is that of Pneumococcal vaccine antigen A homolog (pvaA) from Streptococcus pyogenes serotype M6 (strain ATCC BAA-946 / MGAS10394).